We begin with the raw amino-acid sequence, 86 residues long: MAMTVKKDNNEVRIQWRVADIKIPTSEIKNITQDQDIHAVPKLDSKDVSRIGSTFGKTNRVIIDTEDHEYIIYTQNDQKVYNELTK.

Belongs to the UPF0457 family.

This Staphylococcus aureus (strain USA300) protein is UPF0457 protein SAUSA300_2132.